The chain runs to 144 residues: Arginine decarboxylase proenzyme (144 aa).

The Schiff-base intermediate with substrate; via pyruvic acid role is filled by serine 80. Position 80 is a pyruvic acid (Ser); by autocatalysis (serine 80). The Proton acceptor; for processing activity role is filled by histidine 85. Cysteine 100 acts as the Proton donor; for catalytic activity in catalysis.

The protein belongs to the prokaryotic AdoMetDC family. Type 1 subfamily. In terms of assembly, heterooctamer of four alpha and four beta chains arranged as a tetramer of alpha/beta heterodimers. Pyruvate is required as a cofactor. Is synthesized initially as an inactive proenzyme. Formation of the active enzyme involves a self-maturation process in which the active site pyruvoyl group is generated from an internal serine residue via an autocatalytic post-translational modification. Two non-identical subunits are generated from the proenzyme in this reaction, and the pyruvate is formed at the N-terminus of the alpha chain, which is derived from the carboxyl end of the proenzyme. The post-translation cleavage follows an unusual pathway, termed non-hydrolytic serinolysis, in which the side chain hydroxyl group of the serine supplies its oxygen atom to form the C-terminus of the beta chain, while the remainder of the serine residue undergoes an oxidative deamination to produce ammonia and the pyruvoyl group blocking the N-terminus of the alpha chain.

It catalyses the reaction L-arginine + H(+) = agmatine + CO2. It participates in amine and polyamine biosynthesis; agmatine biosynthesis; agmatine from L-arginine: step 1/1. Functionally, specifically catalyzes the decarboxylation of L-arginine to agmatine. Has no S-adenosylmethionine decarboxylase (AdoMetDC) activity. The polypeptide is Arginine decarboxylase proenzyme (Ignicoccus hospitalis (strain KIN4/I / DSM 18386 / JCM 14125)).